The sequence spans 582 residues: Vesicular glutamate transporter 2 (582 aa).

Over 1–71 (MESVKQRILA…CTCFGLPRRY (71 aa)) the chain is Cytoplasmic. The chain crosses the membrane as a helical span at residues 72–92 (IIAIMSGLGFCISFGIRCNLG). Residues 93 to 125 (VAIVDMVNNSTIHRGGKVIKEKAKFNWDPETVG) are Vesicular-facing. 2 N-linked (GlcNAc...) asparagine glycosylation sites follow: Asn100 and Asn101. Residues 126-146 (MIHGSFFWGYIITQIPGGYIA) traverse the membrane as a helical segment. The Cytoplasmic segment spans residues 147–148 (SR). Residues 149–169 (LAANRVFGAAILLTSTLNMLI) traverse the membrane as a helical segment. At 170–177 (PSAARVHY) the chain is on the vesicular side. Residues 178 to 198 (GCVIFVRILQGLVEGVTYPAC) traverse the membrane as a helical segment. Residues 199–216 (HGIWSKWAPPLERSRLAT) lie on the Cytoplasmic side of the membrane. Residues 217–237 (TSFCGSYAGAVIAMPLAGILV) traverse the membrane as a helical segment. Over 238–244 (QYTGWSS) the chain is Vesicular. Residues 245–265 (VFYVYGSFGMVWYMFWLLVSY) traverse the membrane as a helical segment. Topologically, residues 266–310 (ESPAKHPTITDEERRYIEESIGESANLLGAMEKFKTPWRKFFTSM) are cytoplasmic. A helical membrane pass occupies residues 311 to 331 (PVYAIIVANFCRSWTFYLLLI). Topologically, residues 332–349 (SQPAYFEEVFGFEISKVG) are vesicular. The chain crosses the membrane as a helical span at residues 350–370 (MLSAVPHLVMTIIVPIGGQIA). At 371–386 (DFLRSKQILSTTTVRK) the chain is on the cytoplasmic side. Residues 387-407 (IMNCGGFGMEATLLLVVGYSH) form a helical membrane-spanning segment. Topologically, residues 408–409 (TR) are vesicular. A helical transmembrane segment spans residues 410 to 430 (GVAISFLVLAVGFSGFAISGF). Over 431-443 (NVNHLDIAPRYAS) the chain is Cytoplasmic. Residues 444-464 (ILMGISNGVGTLSGMVCPIIV) traverse the membrane as a helical segment. The Vesicular segment spans residues 465–477 (GAMTKNKSREEWQ). N-linked (GlcNAc...) asparagine glycosylation is present at Asn470. Residues 478–498 (YVFLIAALVHYGGVIFYAIFA) traverse the membrane as a helical segment. Over 499–582 (SGEKQPWADP…HSYKDRVDYS (84 aa)) the chain is Cytoplasmic.

This sequence belongs to the major facilitator superfamily. Sodium/anion cotransporter family. VGLUT subfamily. As to expression, predominantly expressed in adult brain. Expressed in amygdala, caudate nucleus, cerebral cortex, frontal lobe, hippocampus, medulla, occipital lobe, putamen, spinal cord, substantia nigra, subthalamic nucleus, temporal lobe and thalamus.

It is found in the cytoplasmic vesicle. Its subcellular location is the secretory vesicle. The protein resides in the synaptic vesicle membrane. It localises to the synapse. The protein localises to the synaptosome. It is found in the cell membrane. It carries out the reaction L-glutamate(out) = L-glutamate(in). The catalysed reaction is 3 Na(+)(out) + phosphate(out) = 3 Na(+)(in) + phosphate(in). The enzyme catalyses phosphate(in) = phosphate(out). It catalyses the reaction K(+)(in) + H(+)(out) = K(+)(out) + H(+)(in). It carries out the reaction chloride(in) = chloride(out). With respect to regulation, chloride channel activity is allosterically activated by lumenal H(+) and Cl(-) leading to synaptic vesicles acidification. The L-glutamate transport activity is allosterically activated by lumenal H(+) and Cl(-). The allosteric requirement for H(+) efficiently prevents non-vesicular efflux across the plasma membrane. The L-glutamate uniporter activity exhibits a biphasic dependence on chloride concentration. Functionally, multifunctional transporter that transports L-glutamate as well as multiple ions such as chloride, proton, potassium, sodium and phosphate. At the synaptic vesicle membrane, mainly functions as a uniporter which transports preferentially L-glutamate but also, phosphate from the cytoplasm into synaptic vesicles at presynaptic nerve terminals of excitatory neural cells. The L-glutamate or phosphate uniporter activity is electrogenic and is driven by the proton electrochemical gradient, mainly by the electrical gradient established by the vacuolar H(+)-ATPase across the synaptic vesicle membrane. In addition, functions as a chloride channel that allows the chloride permeation through the synaptic vesicle membrane therefore affects the proton electrochemical gradient and promotes synaptic vesicles acidification. Moreover, functions as a vesicular K(+)/H(+) antiport allowing to maintain the electrical gradient and to decrease chemical gradient and therefore sustain vesicular glutamate uptake. The vesicular H(+)/H(+) antiport activity is electroneutral. At the plasma membrane, following exocytosis, functions as a symporter of Na(+) and phosphate from the extracellular space to the cytoplasm allowing synaptic phosphate homeostasis regulation. The symporter activity is driven by an inside negative membrane potential and is electrogenic. Also involved in the regulation of retinal hyaloid vessel regression during postnatal development. May also play a role in the endocrine glutamatergic system of other tissues such as pineal gland and pancreas. The sequence is that of Vesicular glutamate transporter 2 from Homo sapiens (Human).